A 227-amino-acid polypeptide reads, in one-letter code: Translation initiation factor 6 (227 aa).

It belongs to the eIF-6 family.

Functionally, binds to the 50S ribosomal subunit and prevents its association with the 30S ribosomal subunit to form the 70S initiation complex. The polypeptide is Translation initiation factor 6 (Methanococcus maripaludis (strain C5 / ATCC BAA-1333)).